Reading from the N-terminus, the 540-residue chain is Phenylalanine--tRNA ligase beta subunit (540 aa).

The 75-residue stretch at 268–342 (LRHTSVPFSL…MAYGYDRFTL (75 aa)) folds into the B5 domain. Positions 320, 326, 329, and 330 each coordinate Mg(2+).

Belongs to the phenylalanyl-tRNA synthetase beta subunit family. Type 2 subfamily. As to quaternary structure, tetramer of two alpha and two beta subunits. Mg(2+) is required as a cofactor.

Its subcellular location is the cytoplasm. It catalyses the reaction tRNA(Phe) + L-phenylalanine + ATP = L-phenylalanyl-tRNA(Phe) + AMP + diphosphate + H(+). The protein is Phenylalanine--tRNA ligase beta subunit of Metallosphaera sedula (strain ATCC 51363 / DSM 5348 / JCM 9185 / NBRC 15509 / TH2).